Reading from the N-terminus, the 1310-residue chain is Rho family-interacting cell polarization regulator 2 (1310 aa).

Phosphoserine occurs at positions 123 and 178. Residues 196–254 are involved in cell filopodia formation; the sequence is MHNLGHKNTNTPKEPQPKRVEEVYRALKNGLDEYLEFHQTELDKLTAQLKDMKRNSRLG. Residues 224–253 adopt a coiled-coil conformation; the sequence is NGLDEYLEFHQTELDKLTAQLKDMKRNSRL. Ser-508 is modified (phosphoserine). Over residues 588 to 608 the composition is skewed to polar residues; sequence SSLSSQNEGTEDSSSASSRNS. The segment at 588 to 639 is disordered; the sequence is SSLSSQNEGTEDSSSASSRNSLGEDHEPKSHSKSDTVEPKKPSVDARSGTES. Over residues 609–631 the composition is skewed to basic and acidic residues; sequence LGEDHEPKSHSKSDTVEPKKPSV. The residue at position 682 (Ser-682) is a Phosphoserine.

This sequence belongs to the RIPOR family. Homooligomer; homooligomerization is regulated by RHOC and leads to the formation of concatemers through the association of N- and C-termini. Interacts (phosphorylated form) with 14-3-3 proteins; these interactions occur during myogenic cell differentiation and also induces T cell proliferation arrest. Interacts (phosphorylated form) with HDAC6; this interaction occurs during early myogenic differentiation, prevents HDAC6 to deacetylate tubulin and also induces T cell proliferation arrest. Interacts with DYSF; this interaction occurs during early myogenic differentiation. Interacts with MYOF. Interacts (via active GTP- or inactive GDP-bound forms) with RHOA; this interaction is direct, blocks the loading of GTP to RHOA and decreases upon chemokine CCL19 stimulation in primary T lymphocytes. Interacts with RHOC. Interacts (via phosphorylated form) with YWHAB; this interaction occurs in a chemokine-dependent manner and does not compete for binding of RIPOR2 with RHOA nor blocks inhibition of RIPOR2-mediated RHOA activity. Interacts with YWHAE. Interacts with YWHAQ. Phosphorylated. Chemokine-induced phosphorylation in neutrophils occurs in a PKC- and AKT-dependent manner, resulting in RIPOR2 interaction with YWHAB and stabilization. Phosphorylated by PKCA, AKT1 and MAPKAPK1A; in vitro. As to expression, expressed in the cochlea (at protein level).

It is found in the cytoplasm. The protein resides in the cytoskeleton. Its subcellular location is the cell projection. The protein localises to the filopodium. It localises to the apical cell membrane. It is found in the stereocilium. The protein resides in the stereocilium membrane. Its function is as follows. Acts as an inhibitor of the small GTPase RHOA and plays several roles in the regulation of myoblast and hair cell differentiation, lymphocyte T proliferation and neutrophil polarization. Plays a role in fetal mononuclear myoblast differentiation by promoting filopodia and myotube formation. Maintains naive T lymphocytes in a quiescent state and prevents chemokine-induced T lymphocyte responses, such as cell adhesion, polarization and migration. Involved also in the regulation of neutrophil polarization, chemotaxis and adhesion. Required for normal development of inner and outer hair cell stereocilia within the cochlea of the inner ear. Plays a role for maintaining the structural organization of the basal domain of stereocilia. Involved in mechanosensory hair cell function. Required for normal hearing. In Rattus norvegicus (Rat), this protein is Rho family-interacting cell polarization regulator 2.